Consider the following 540-residue polypeptide: ADP,ATP carrier protein 2 (540 aa).

Helical transmembrane passes span 24-44 (FSKF…YCLL), 62-82 (VIPF…TMVY), 94-114 (VFYC…VIIY), 151-171 (IYYV…FWGL), 223-243 (SVML…IWLY), 295-315 (LLGL…FEVV), 337-357 (ITTL…GQCI), 367-387 (LVTP…IFAA), 391-411 (ISIF…WTGG), 458-478 (SGGS…AASL), and 480-500 (VIAL…AYIG).

It belongs to the ADP/ATP translocase tlc family.

It is found in the cell membrane. The sequence is that of ADP,ATP carrier protein 2 (tlcB) from Chlamydia pneumoniae (Chlamydophila pneumoniae).